The sequence spans 672 residues: Threonine--tRNA ligase (672 aa).

In terms of domain architecture, TGS spans 1 to 64; that stretch reads MTELLKISLP…EGDAELALIT (64 aa). The segment at 257-566 is catalytic; the sequence is DHRKLGREMD…LIEHFAGRLP (310 aa). Zn(2+) contacts are provided by cysteine 362, histidine 413, and histidine 543.

The protein belongs to the class-II aminoacyl-tRNA synthetase family. As to quaternary structure, homodimer. Zn(2+) is required as a cofactor.

Its subcellular location is the cytoplasm. The enzyme catalyses tRNA(Thr) + L-threonine + ATP = L-threonyl-tRNA(Thr) + AMP + diphosphate + H(+). Catalyzes the attachment of threonine to tRNA(Thr) in a two-step reaction: L-threonine is first activated by ATP to form Thr-AMP and then transferred to the acceptor end of tRNA(Thr). Also edits incorrectly charged L-seryl-tRNA(Thr). The sequence is that of Threonine--tRNA ligase from Erythrobacter litoralis (strain HTCC2594).